A 537-amino-acid chain; its full sequence is Cytochrome P450 monooxygenase alt2 (537 aa).

The chain crosses the membrane as a helical span at residues histidine 4–isoleucine 24. Cysteine 474 contacts heme.

It belongs to the cytochrome P450 family. It depends on heme as a cofactor.

The protein localises to the membrane. The protein operates within secondary metabolite biosynthesis. Its function is as follows. Cytochrome P450 monooxygenase; part of the gene cluster that mediates the biosynthesis of alternapyrone derivatives. Alternapyrone is a decaketide with octa-methylation from methionine on every C2 unit except the third unit. All the domains in the polyketide synthase alt5 are apparently involved in alternapyrone synthesis, that is, the 8 CMeT, 7 KR, 7 DH, and 4 ER reactions in the 9 KS-mediated condensation steps required for alternapyrone synthesis. the alternapyrone produced by alt5 might be intensively modified by cytochrome P450 monooxygenases alt1, alt2 and alt3 and FAD-dependent oxidoreductase alt4 present in the alt gene cluster. In Alternaria solani, this protein is Cytochrome P450 monooxygenase alt2.